The chain runs to 79 residues: UPF0180 protein BCG9842_B3897 (79 aa).

It belongs to the UPF0180 family.

This is UPF0180 protein BCG9842_B3897 from Bacillus cereus (strain G9842).